Here is a 258-residue protein sequence, read N- to C-terminus: Leucyl/phenylalanyl-tRNA--protein transferase (258 aa).

Belongs to the L/F-transferase family.

The protein localises to the cytoplasm. It catalyses the reaction N-terminal L-lysyl-[protein] + L-leucyl-tRNA(Leu) = N-terminal L-leucyl-L-lysyl-[protein] + tRNA(Leu) + H(+). The catalysed reaction is N-terminal L-arginyl-[protein] + L-leucyl-tRNA(Leu) = N-terminal L-leucyl-L-arginyl-[protein] + tRNA(Leu) + H(+). The enzyme catalyses L-phenylalanyl-tRNA(Phe) + an N-terminal L-alpha-aminoacyl-[protein] = an N-terminal L-phenylalanyl-L-alpha-aminoacyl-[protein] + tRNA(Phe). In terms of biological role, functions in the N-end rule pathway of protein degradation where it conjugates Leu, Phe and, less efficiently, Met from aminoacyl-tRNAs to the N-termini of proteins containing an N-terminal arginine or lysine. The sequence is that of Leucyl/phenylalanyl-tRNA--protein transferase from Alkalilimnicola ehrlichii (strain ATCC BAA-1101 / DSM 17681 / MLHE-1).